The sequence spans 366 residues: Phospho-N-acetylmuramoyl-pentapeptide-transferase (366 aa).

A run of 10 helical transmembrane segments spans residues 3 to 23 (QIII…PVLI), 52 to 72 (MGGI…GIVG), 80 to 100 (LTAS…LGFA), 120 to 140 (LIGQ…FPNA), 161 to 181 (LAIG…YILI), 197 to 217 (LAAG…FWQF), 238 to 258 (LAIL…WNAA), 262 to 282 (IFMG…LSVA), 287 to 307 (LLMI…VIQV), and 341 to 361 (FWLI…GEWL).

This sequence belongs to the glycosyltransferase 4 family. MraY subfamily. The cofactor is Mg(2+).

The protein localises to the cell membrane. The enzyme catalyses UDP-N-acetyl-alpha-D-muramoyl-L-alanyl-gamma-D-glutamyl-meso-2,6-diaminopimeloyl-D-alanyl-D-alanine + di-trans,octa-cis-undecaprenyl phosphate = di-trans,octa-cis-undecaprenyl diphospho-N-acetyl-alpha-D-muramoyl-L-alanyl-D-glutamyl-meso-2,6-diaminopimeloyl-D-alanyl-D-alanine + UMP. It participates in cell wall biogenesis; peptidoglycan biosynthesis. Functionally, catalyzes the initial step of the lipid cycle reactions in the biosynthesis of the cell wall peptidoglycan: transfers peptidoglycan precursor phospho-MurNAc-pentapeptide from UDP-MurNAc-pentapeptide onto the lipid carrier undecaprenyl phosphate, yielding undecaprenyl-pyrophosphoryl-MurNAc-pentapeptide, known as lipid I. This Corynebacterium diphtheriae (strain ATCC 700971 / NCTC 13129 / Biotype gravis) protein is Phospho-N-acetylmuramoyl-pentapeptide-transferase.